The sequence spans 148 residues: Photosystem II extrinsic protein U, chloroplastic (148 aa).

A chloroplast-targeting transit peptide spans 1–32 (MKLAVFAVLISTVAAFVAPNGVQRAATTELNA). The N-terminal 22 residues, 33 to 54 (ERREFLSAAAVAAGLAFPLTAN), are a transit peptide targeting the thylakoid.

The protein belongs to the PsbU family. PSII is composed of 1 copy each of membrane proteins PsbA, PsbB, PsbC, PsbD, PsbE, PsbF, PsbH, PsbI, PsbJ, PsbK, PsbL, PsbM, PsbT, PsbX, PsbY, PsbZ, Psb30/Ycf12, at least 3 peripheral proteins of the oxygen-evolving complex and a large number of cofactors. It forms dimeric complexes. The oxygen-evolving complex may be composed of PsbO, PsbQ', PsbV and PsbU.

The protein resides in the plastid. It is found in the chloroplast thylakoid membrane. In terms of biological role, one of the extrinsic, lumenal subunits of photosystem II (PSII), which stabilize and protect the oxygen-evolving complex. PSII is a light-driven water plastoquinone oxidoreductase, using light energy to abstract electrons from H(2)O, generating a proton gradient subsequently used for ATP formation. Stabilizes the structure of photosystem II oxygen-evolving complex (OEC), the ion environment of oxygen evolution and protects the OEC against heat-induced inactivation. This chain is Photosystem II extrinsic protein U, chloroplastic, found in Phaeodactylum tricornutum (Diatom).